Here is a 548-residue protein sequence, read N- to C-terminus: MASKEIVFDTKARERLARGVDKLANAVKVTLGPKGRNVVIEKSFGAPVITKDGVSVAKEIELEDKFENMGAQMVKEVASKTSDIAGDGTTTATILAQAIYKEGVKLVAAGRNPMAIKRGVDKAVEALVKELGNLAKPTRDQKEIAQVGTISANSDTTIGNIIAEAMSKVGKEGVITVEEAKGLETTLEVVEGMQFDRGYLSPYFVTDPEKMVCEMDEPLILINEKKISSMKDMLPVLEQVAKMNRPLVIIAEDVDGEALATLVVNKLRGTLQVVAVKAPGFGERRKAMLEDIATLTGGRVISEEMGIKLENATVADLGNAKRIVVDKENTTIVDGAGESEAIKARVKMIRAQIEETSSDYDREKLQERLAKIVGGVAVINVGAATETEMKEKKDRVEDALNATRAAVEEGIVPGGGTALVRCCKVLDDVKPADDDEAAGVTIIRRAIEEPLRQIAANAGFEGSIICEKVKEGKDAFGFNAATGEFEDLIAAGVIDPKKVSRIALQNAASVASLLLTTECAIAEKPKEDAPAAPAMGGMGGMGGMGGMY.

Residues 30–33, K51, 87–91, G415, 479–481, and D495 contribute to the ATP site; these read TLGP, DGTTT, and NAA.

This sequence belongs to the chaperonin (HSP60) family. Forms a cylinder of 14 subunits composed of two heptameric rings stacked back-to-back. Interacts with the co-chaperonin GroES.

It localises to the cytoplasm. It catalyses the reaction ATP + H2O + a folded polypeptide = ADP + phosphate + an unfolded polypeptide.. Its function is as follows. Together with its co-chaperonin GroES, plays an essential role in assisting protein folding. The GroEL-GroES system forms a nano-cage that allows encapsulation of the non-native substrate proteins and provides a physical environment optimized to promote and accelerate protein folding. This is Chaperonin GroEL from Oleidesulfovibrio alaskensis (strain ATCC BAA-1058 / DSM 17464 / G20) (Desulfovibrio alaskensis).